The primary structure comprises 286 residues: Replication protein RepA (286 aa).

Belongs to the initiator RepB protein family.

Functionally, repA is essential for origin function, autoregulates its own synthesis from the promoter, and, when overproduced, blocks origin function. This chain is Replication protein RepA (repA), found in Escherichia coli.